We begin with the raw amino-acid sequence, 79 residues long: Small ribosomal subunit protein bS16c (79 aa).

This sequence belongs to the bacterial ribosomal protein bS16 family.

The protein localises to the plastid. Its subcellular location is the chloroplast. The polypeptide is Small ribosomal subunit protein bS16c (Thalassiosira pseudonana (Marine diatom)).